A 431-amino-acid polypeptide reads, in one-letter code: tRNA(Ile)-lysidine synthase (431 aa).

25-30 contacts ATP; the sequence is SGGLDS.

It belongs to the tRNA(Ile)-lysidine synthase family.

Its subcellular location is the cytoplasm. The enzyme catalyses cytidine(34) in tRNA(Ile2) + L-lysine + ATP = lysidine(34) in tRNA(Ile2) + AMP + diphosphate + H(+). In terms of biological role, ligates lysine onto the cytidine present at position 34 of the AUA codon-specific tRNA(Ile) that contains the anticodon CAU, in an ATP-dependent manner. Cytidine is converted to lysidine, thus changing the amino acid specificity of the tRNA from methionine to isoleucine. This Legionella pneumophila (strain Paris) protein is tRNA(Ile)-lysidine synthase.